We begin with the raw amino-acid sequence, 223 residues long: Phosphoribosylformylglycinamidine synthase subunit PurQ (223 aa).

In terms of domain architecture, Glutamine amidotransferase type-1 spans 2 to 223; it reads KIAVVVFPGS…KSLLKAGVQA (222 aa). Cys-86 (nucleophile) is an active-site residue. Catalysis depends on residues His-195 and Glu-197.

Part of the FGAM synthase complex composed of 1 PurL, 1 PurQ and 2 PurS subunits.

The protein resides in the cytoplasm. The catalysed reaction is N(2)-formyl-N(1)-(5-phospho-beta-D-ribosyl)glycinamide + L-glutamine + ATP + H2O = 2-formamido-N(1)-(5-O-phospho-beta-D-ribosyl)acetamidine + L-glutamate + ADP + phosphate + H(+). It catalyses the reaction L-glutamine + H2O = L-glutamate + NH4(+). It participates in purine metabolism; IMP biosynthesis via de novo pathway; 5-amino-1-(5-phospho-D-ribosyl)imidazole from N(2)-formyl-N(1)-(5-phospho-D-ribosyl)glycinamide: step 1/2. Functionally, part of the phosphoribosylformylglycinamidine synthase complex involved in the purines biosynthetic pathway. Catalyzes the ATP-dependent conversion of formylglycinamide ribonucleotide (FGAR) and glutamine to yield formylglycinamidine ribonucleotide (FGAM) and glutamate. The FGAM synthase complex is composed of three subunits. PurQ produces an ammonia molecule by converting glutamine to glutamate. PurL transfers the ammonia molecule to FGAR to form FGAM in an ATP-dependent manner. PurS interacts with PurQ and PurL and is thought to assist in the transfer of the ammonia molecule from PurQ to PurL. This Lactobacillus acidophilus (strain ATCC 700396 / NCK56 / N2 / NCFM) protein is Phosphoribosylformylglycinamidine synthase subunit PurQ.